A 523-amino-acid chain; its full sequence is 11-oxo-beta-amyrin 30-oxidase (523 aa).

Residues Ala-9 to Val-29 form a helical membrane-spanning segment. Cys-471 contacts heme.

Belongs to the cytochrome P450 family. Heme serves as cofactor. In terms of tissue distribution, expressed in roots, stolons and stems. Not detected in leaves.

The protein localises to the membrane. It catalyses the reaction 11-oxo-beta-amyrin + 3 reduced [NADPH--hemoprotein reductase] + 3 O2 = glycyrrhetinate + 3 oxidized [NADPH--hemoprotein reductase] + 4 H2O + 4 H(+). The enzyme catalyses 11-oxo-beta-amyrin + reduced [NADPH--hemoprotein reductase] + O2 = 30-hydroxy-11-oxo-beta-amyrin + oxidized [NADPH--hemoprotein reductase] + H2O + H(+). It carries out the reaction 30-hydroxy-11-oxo-beta-amyrin + reduced [NADPH--hemoprotein reductase] + O2 = glycyrrhetaldehyde + oxidized [NADPH--hemoprotein reductase] + 2 H2O + H(+). The catalysed reaction is glycyrrhetaldehyde + reduced [NADPH--hemoprotein reductase] + O2 = glycyrrhetinate + oxidized [NADPH--hemoprotein reductase] + H2O + 2 H(+). Its function is as follows. Involved in the biosynthesis of Glycyrrhetinic acid (GA), a natural product which exhibits anti-inflammatory activity. Involved in the biosynthesis of the triterpenoid saponin glycyrrhizin. Catalyzes three sequential oxidation steps at C-30 of 11-oxo-beta-amyrin. Also able to catalyze C-30 monohydroxylation of beta-amyrin to produce 30-hydroxy-beta-amyrin. May be also responsible for the oxidation at positions C-22 and C-29 in addition to C-30. This is 11-oxo-beta-amyrin 30-oxidase from Glycyrrhiza uralensis (Chinese licorice).